The following is a 116-amino-acid chain: Nucleoid-associated protein P9301_00191 (116 aa).

Belongs to the YbaB/EbfC family. In terms of assembly, homodimer.

It localises to the cytoplasm. The protein resides in the nucleoid. Functionally, binds to DNA and alters its conformation. May be involved in regulation of gene expression, nucleoid organization and DNA protection. This Prochlorococcus marinus (strain MIT 9301) protein is Nucleoid-associated protein P9301_00191.